The primary structure comprises 295 residues: GTPase Era (295 aa).

Residues 3 to 171 enclose the Era-type G domain; the sequence is KSGFITVIGR…LELMKKYLPE (169 aa). Residues 11–18 are G1; it reads GRPNVGKS. A GTP-binding site is contributed by 11–18; that stretch reads GRPNVGKS. Residues 37–41 are G2; sequence QTTRN. The G3 stretch occupies residues 58-61; the sequence is DTPG. Residues 58-62 and 120-123 contribute to the GTP site; these read DTPGM and NKID. The segment at 120 to 123 is G4; the sequence is NKID. The G5 stretch occupies residues 150 to 152; that stretch reads ISA. Positions 202–279 constitute a KH type-2 domain; it reads LSEEVPHGIA…SLKVWVKVKK (78 aa).

The protein belongs to the TRAFAC class TrmE-Era-EngA-EngB-Septin-like GTPase superfamily. Era GTPase family. Monomer.

The protein localises to the cytoplasm. It is found in the cell membrane. An essential GTPase that binds both GDP and GTP, with rapid nucleotide exchange. Plays a role in 16S rRNA processing and 30S ribosomal subunit biogenesis and possibly also in cell cycle regulation and energy metabolism. The sequence is that of GTPase Era from Clostridium tetani (strain Massachusetts / E88).